We begin with the raw amino-acid sequence, 493 residues long: 3-octaprenyl-4-hydroxybenzoate carboxy-lyase (493 aa).

Mn(2+) is bound at residue Asn-172. Prenylated FMN is bound by residues 175 to 177 (IYR), 189 to 191 (RWL), and 194 to 195 (RG). Position 238 (Glu-238) interacts with Mn(2+). Asp-287 functions as the Proton donor in the catalytic mechanism.

It belongs to the UbiD family. As to quaternary structure, homohexamer. It depends on prenylated FMN as a cofactor. The cofactor is Mn(2+).

The protein resides in the cell membrane. It catalyses the reaction a 4-hydroxy-3-(all-trans-polyprenyl)benzoate + H(+) = a 2-(all-trans-polyprenyl)phenol + CO2. It participates in cofactor biosynthesis; ubiquinone biosynthesis. Functionally, catalyzes the decarboxylation of 3-octaprenyl-4-hydroxy benzoate to 2-octaprenylphenol, an intermediate step in ubiquinone biosynthesis. This chain is 3-octaprenyl-4-hydroxybenzoate carboxy-lyase, found in Shewanella baltica (strain OS195).